The sequence spans 773 residues: Ergothioneine biosynthesis protein 1 (773 aa).

The L-histidine N(alpha)-methyltransferase stretch occupies residues 16–322; the sequence is PESIEQSLKR…ESTIADYSTY (307 aa). Y51 provides a ligand contact to L-histidine. S-adenosyl-L-methionine contacts are provided by residues G85, K91, D112, and 142 to 143; that span reads CF. L-histidine-binding positions include N172, Y212, and 287-289; that span reads EES. The interval 347–772 is hercynylcysteine S-oxide synthase; the sequence is ALRKVWLFIT…YAWIGARLVK (426 aa). Residues H382, H476, and H480 each contribute to the Fe cation site.

The protein in the N-terminal section; belongs to the methyltransferase superfamily. EgtD family. It in the C-terminal section; belongs to the EgtB family. The cofactor is Fe(2+).

Its subcellular location is the cytoplasm. It localises to the nucleus. It catalyses the reaction L-histidine + 3 S-adenosyl-L-methionine = hercynine + 3 S-adenosyl-L-homocysteine + 3 H(+). The catalysed reaction is hercynine + L-cysteine + O2 = S-(hercyn-2-yl)-L-cysteine S-oxide + H2O. It participates in amino-acid biosynthesis; ergothioneine biosynthesis. Catalyzes the SAM-dependent triple methylation of the alpha-amino group of histidine to form hercynine and subsequent conjugation with cysteine and oxygen to form hercynylcysteine sulfoxide, the first two steps in the biosynthesis pathway of ergothioneine. May play a role in meiosis. This chain is Ergothioneine biosynthesis protein 1, found in Schizosaccharomyces pombe (strain 972 / ATCC 24843) (Fission yeast).